The primary structure comprises 470 residues: MKNFLCEDFLLSNETARRLYHEHAFHQPIYDYHCHLNPAEVTQNRQFDNLGQIWLEGDHYKWRGMRSAGIEERLITGDASDYDKYMAWAKTVPQTLGNPLYHWTHLELRRPFGITNTLFSPDTADQIWHQCNELLATPEFTARGIMQQMNVVMAGTTDDPIDSLEHHKAIAEDDTFNVKVLPSWRPDKAFKIELDLFADYMHKLGEVADIDIRRFDDLLSALDKRLAHFDSHGCRAADHGIEIVRYAPIPSEADLDALLARRLSGEVLSELECAQFSTAVQVWLGKRYAQLGWVMQLHIGAQRNNSTRMFQLLGADAGFDSIGDRPFAFELAHLLDEMDQTNELPRTILYCLNPRDNEMMATMIGNFQGGGIAGKVQFGSGWWFNDQKDGMQRQMEQLSQLGLLSQFVGMLTDSRSFLSYTRHEYFRRILCDMVGRWAENGEVPNDLSLLGPMVEDICFGNAKRYFEERA.

Belongs to the metallo-dependent hydrolases superfamily. Uronate isomerase family.

It catalyses the reaction D-glucuronate = D-fructuronate. The enzyme catalyses aldehydo-D-galacturonate = keto-D-tagaturonate. Its pathway is carbohydrate metabolism; pentose and glucuronate interconversion. The chain is Uronate isomerase from Vibrio parahaemolyticus serotype O3:K6 (strain RIMD 2210633).